Here is a 218-residue protein sequence, read N- to C-terminus: Ribose-5-phosphate isomerase A (218 aa).

Residues 28–31 (TGST), 81–84 (DGAD), and 94–97 (KGGG) contribute to the substrate site. The active-site Proton acceptor is the Glu103. Residue Lys121 participates in substrate binding.

It belongs to the ribose 5-phosphate isomerase family. As to quaternary structure, homodimer.

It catalyses the reaction aldehydo-D-ribose 5-phosphate = D-ribulose 5-phosphate. The protein operates within carbohydrate degradation; pentose phosphate pathway; D-ribose 5-phosphate from D-ribulose 5-phosphate (non-oxidative stage): step 1/1. Its function is as follows. Catalyzes the reversible conversion of ribose-5-phosphate to ribulose 5-phosphate. The sequence is that of Ribose-5-phosphate isomerase A from Vibrio cholerae serotype O1 (strain ATCC 39541 / Classical Ogawa 395 / O395).